Consider the following 708-residue polypeptide: Alpha-galactosidase (708 aa).

The active-site Nucleophile is the Asp441. The active-site Proton donor is Asp505.

Belongs to the glycosyl hydrolase 36 family. Homotetramer.

It catalyses the reaction Hydrolysis of terminal, non-reducing alpha-D-galactose residues in alpha-D-galactosides, including galactose oligosaccharides, galactomannans and galactolipids.. This Escherichia coli protein is Alpha-galactosidase (rafA).